The chain runs to 227 residues: 2,3-bisphosphoglycerate-dependent phosphoglycerate mutase (227 aa).

Substrate contacts are provided by residues 7 to 14, 20 to 21, Arg59, 86 to 89, Lys97, 113 to 114, and 182 to 183; these read RHGFSEWN, TG, ERHY, RR, and GN. The active-site Tele-phosphohistidine intermediate is His8. Glu86 functions as the Proton donor/acceptor in the catalytic mechanism.

Belongs to the phosphoglycerate mutase family. BPG-dependent PGAM subfamily. Homodimer.

It carries out the reaction (2R)-2-phosphoglycerate = (2R)-3-phosphoglycerate. It functions in the pathway carbohydrate degradation; glycolysis; pyruvate from D-glyceraldehyde 3-phosphate: step 3/5. Catalyzes the interconversion of 2-phosphoglycerate and 3-phosphoglycerate. This Actinobacillus pleuropneumoniae serotype 5b (strain L20) protein is 2,3-bisphosphoglycerate-dependent phosphoglycerate mutase.